Here is a 189-residue protein sequence, read N- to C-terminus: Chitin synthase 1 (189 aa).

It belongs to the chitin synthase family. Class I subfamily.

Its subcellular location is the cell membrane. It catalyses the reaction [(1-&gt;4)-N-acetyl-beta-D-glucosaminyl](n) + UDP-N-acetyl-alpha-D-glucosamine = [(1-&gt;4)-N-acetyl-beta-D-glucosaminyl](n+1) + UDP + H(+). Functionally, polymerizes chitin, a structural polymer of the cell wall and septum, by transferring the sugar moiety of UDP-GlcNAc to the non-reducing end of the growing chitin polymer. The chain is Chitin synthase 1 (CHS1) from Exophiala jeanselmei (Dematiaceous fungus).